A 198-amino-acid polypeptide reads, in one-letter code: Prostamide/prostaglandin F synthase (198 aa).

Y108 carries the phosphotyrosine modification.

It belongs to the peroxiredoxin-like PRXL2 family. Prostamide/prostaglandin F synthase subfamily.

The protein resides in the cytoplasm. Its subcellular location is the cytosol. It carries out the reaction prostaglandin H2 + [thioredoxin]-dithiol = prostaglandin F2alpha + [thioredoxin]-disulfide. It catalyses the reaction prostamide F2alpha + [thioredoxin]-disulfide = prostamide H2 + [thioredoxin]-dithiol. In terms of biological role, catalyzes the reduction of prostaglandin-ethanolamide H(2) (prostamide H(2)) to prostamide F(2alpha) with NADPH as proton donor. Also able to reduce prostaglandin H(2) to prostaglandin F(2alpha). This Homo sapiens (Human) protein is Prostamide/prostaglandin F synthase.